A 511-amino-acid chain; its full sequence is 2-isopropylmalate synthase (511 aa).

A Pyruvate carboxyltransferase domain is found at 5–267 (LIVFDTTLRD…DTRIDATQIV (263 aa)). Positions 14, 202, 204, and 238 each coordinate Mn(2+). The segment at 393–511 (RLVASRFHSE…SKLERLNPQL (119 aa)) is regulatory domain.

Belongs to the alpha-IPM synthase/homocitrate synthase family. LeuA type 1 subfamily. Homodimer. It depends on Mn(2+) as a cofactor.

It localises to the cytoplasm. The catalysed reaction is 3-methyl-2-oxobutanoate + acetyl-CoA + H2O = (2S)-2-isopropylmalate + CoA + H(+). It functions in the pathway amino-acid biosynthesis; L-leucine biosynthesis; L-leucine from 3-methyl-2-oxobutanoate: step 1/4. Catalyzes the condensation of the acetyl group of acetyl-CoA with 3-methyl-2-oxobutanoate (2-ketoisovalerate) to form 3-carboxy-3-hydroxy-4-methylpentanoate (2-isopropylmalate). This chain is 2-isopropylmalate synthase, found in Aromatoleum aromaticum (strain DSM 19018 / LMG 30748 / EbN1) (Azoarcus sp. (strain EbN1)).